The chain runs to 312 residues: Olfactory receptor 6C2 (312 aa).

The Extracellular portion of the chain corresponds to 1–23; that stretch reads MKNHTVIRTFILLGLTGDPHLQV. Asn-3 carries an N-linked (GlcNAc...) asparagine glycan. The helical transmembrane segment at 24–44 threads the bilayer; the sequence is LLFIFLFLTYMLSVTGNLTII. At 45–52 the chain is on the cytoplasmic side; the sequence is TLTLVDHH. Residues 53-73 form a helical membrane-spanning segment; that stretch reads LKTPMYFFLRNFSFLEVSFTT. Over 74–97 the chain is Extracellular; sequence VCIPRFLYNISMGDNTITYNACAS. Asn-82 is a glycosylation site (N-linked (GlcNAc...) asparagine). Cys-95 and Cys-187 are disulfide-bonded. Residues 98–118 traverse the membrane as a helical segment; the sequence is QIFFVILFGATEFFLLAAMSY. Over 119-137 the chain is Cytoplasmic; the sequence is DRYVAICKPLHYVVIMNNR. The chain crosses the membrane as a helical span at residues 138-158; that stretch reads VCTLLVLCCWVAGLMIIVPPL. The Extracellular segment spans residues 159-195; the sequence is SLGLQLEFCDSNAIDHFSCDAGPLLKISCSDTWVIEQ. Residues 196 to 215 form a helical membrane-spanning segment; the sequence is MVILMAVFALIITLVCVILS. Residues 216–235 are Cytoplasmic-facing; that stretch reads YLYIVRTILKFPSVQQRKKA. Residues 236–256 traverse the membrane as a helical segment; it reads FSTCSSHMIVVSIAYGSCIFI. The Extracellular segment spans residues 257–269; the sequence is YIKPSAKDEVAIN. Residues 270-290 traverse the membrane as a helical segment; that stretch reads KGVSVLTTSVAPLLNPFIYTL. The Cytoplasmic portion of the chain corresponds to 291–312; sequence RNKQVKQAFSDSIKRIAFLSKK.

This sequence belongs to the G-protein coupled receptor 1 family.

It localises to the cell membrane. Its function is as follows. Odorant receptor. The chain is Olfactory receptor 6C2 (OR6C2) from Homo sapiens (Human).